Here is a 76-residue protein sequence, read N- to C-terminus: Small ribosomal subunit protein uS17 (76 aa).

This sequence belongs to the universal ribosomal protein uS17 family. As to quaternary structure, part of the 30S ribosomal subunit.

Its function is as follows. One of the primary rRNA binding proteins, it binds specifically to the 5'-end of 16S ribosomal RNA. This chain is Small ribosomal subunit protein uS17, found in Ruegeria pomeroyi (strain ATCC 700808 / DSM 15171 / DSS-3) (Silicibacter pomeroyi).